Here is a 111-residue protein sequence, read N- to C-terminus: Large ribosomal subunit protein uL22 (111 aa).

The protein belongs to the universal ribosomal protein uL22 family. As to quaternary structure, part of the 50S ribosomal subunit.

In terms of biological role, this protein binds specifically to 23S rRNA; its binding is stimulated by other ribosomal proteins, e.g. L4, L17, and L20. It is important during the early stages of 50S assembly. It makes multiple contacts with different domains of the 23S rRNA in the assembled 50S subunit and ribosome. Its function is as follows. The globular domain of the protein is located near the polypeptide exit tunnel on the outside of the subunit, while an extended beta-hairpin is found that lines the wall of the exit tunnel in the center of the 70S ribosome. This is Large ribosomal subunit protein uL22 from Xylella fastidiosa (strain 9a5c).